The primary structure comprises 285 residues: Transmembrane protein 53-B (285 aa).

A helical membrane pass occupies residues 165-185; that stretch reads FLALAAFAIMVIILRIVLYPV.

It belongs to the TMEM53 family.

It is found in the nucleus outer membrane. In terms of biological role, ensures normal bone formation, through the negative regulation of bone morphogenetic protein (BMP) signaling in osteoblast lineage cells by blocking cytoplasm-nucleus translocation of phosphorylated SMAD proteins. The chain is Transmembrane protein 53-B (tmem53-b) from Xenopus laevis (African clawed frog).